The chain runs to 915 residues: Alanine--tRNA ligase (915 aa).

Positions 605, 609, 709, and 713 each coordinate Zn(2+). A disordered region spans residues 882–901 (GGGGDERLAQGGGRNPDGLT).

The protein belongs to the class-II aminoacyl-tRNA synthetase family. Zn(2+) serves as cofactor.

The protein resides in the cytoplasm. The enzyme catalyses tRNA(Ala) + L-alanine + ATP = L-alanyl-tRNA(Ala) + AMP + diphosphate. In terms of biological role, catalyzes the attachment of alanine to tRNA(Ala) in a two-step reaction: alanine is first activated by ATP to form Ala-AMP and then transferred to the acceptor end of tRNA(Ala). Also edits incorrectly charged Ser-tRNA(Ala) and Gly-tRNA(Ala) via its editing domain. This Methanopyrus kandleri (strain AV19 / DSM 6324 / JCM 9639 / NBRC 100938) protein is Alanine--tRNA ligase.